Consider the following 373-residue polypeptide: MSEIFYNIVRRVRRDTMREIEVEGDNRYKIYIDTNLDKLYKAFEDYKIKSNSEMFLITDDKVYSIYKDRIEMLKNIYNIKEFYFKNGEENKTLETLQEIYSFLMENNAKRNSIIIALGGGVVGDLVGFVASTYMRGVRYINIPTTLLSQIDSCVGGKVGYNYKGIKNLIGSFYNPEFVFISTNFLKTLDFQRFKDGLGEVIKYGLILDEEIISFIEENYKGVLEKESDKLLYITRTCLILKKQVIEMDYKDLGFRNILNFGHTIGHAIEMTSKNKITHGEAVALGMLVSLKLSEHIYGLDKNLYYRMEKLYKKLGLPTKYKVDNYNLFMYAINHDKKNKDNIRFVLLKDVEKPEVKIEVNKEEILKAIEESIN.

Residues 120–124 (GVVGD), 144–145 (TT), Lys157, Lys166, and 184–187 (FLKT) each bind NAD(+). Zn(2+)-binding residues include Glu199, His262, and His278.

This sequence belongs to the sugar phosphate cyclases superfamily. Dehydroquinate synthase family. The cofactor is NAD(+). Co(2+) is required as a cofactor. Requires Zn(2+) as cofactor.

It localises to the cytoplasm. It carries out the reaction 7-phospho-2-dehydro-3-deoxy-D-arabino-heptonate = 3-dehydroquinate + phosphate. The protein operates within metabolic intermediate biosynthesis; chorismate biosynthesis; chorismate from D-erythrose 4-phosphate and phosphoenolpyruvate: step 2/7. Functionally, catalyzes the conversion of 3-deoxy-D-arabino-heptulosonate 7-phosphate (DAHP) to dehydroquinate (DHQ). The chain is 3-dehydroquinate synthase from Clostridium tetani (strain Massachusetts / E88).